Reading from the N-terminus, the 321-residue chain is Acetyl-coenzyme A carboxylase carboxyl transferase subunit alpha (321 aa).

In terms of domain architecture, CoA carboxyltransferase C-terminal spans 37-298 (DLDDEIKRLQ…KQRILSDLED (262 aa)).

Belongs to the AccA family. In terms of assembly, acetyl-CoA carboxylase is a heterohexamer composed of biotin carboxyl carrier protein (AccB), biotin carboxylase (AccC) and two subunits each of ACCase subunit alpha (AccA) and ACCase subunit beta (AccD).

Its subcellular location is the cytoplasm. The catalysed reaction is N(6)-carboxybiotinyl-L-lysyl-[protein] + acetyl-CoA = N(6)-biotinyl-L-lysyl-[protein] + malonyl-CoA. It functions in the pathway lipid metabolism; malonyl-CoA biosynthesis; malonyl-CoA from acetyl-CoA: step 1/1. Component of the acetyl coenzyme A carboxylase (ACC) complex. First, biotin carboxylase catalyzes the carboxylation of biotin on its carrier protein (BCCP) and then the CO(2) group is transferred by the carboxyltransferase to acetyl-CoA to form malonyl-CoA. The polypeptide is Acetyl-coenzyme A carboxylase carboxyl transferase subunit alpha (Mannheimia succiniciproducens (strain KCTC 0769BP / MBEL55E)).